The chain runs to 210 residues: Probable glutathione peroxidase 8 (210 aa).

Residues 21–40 (VLLSMTVGVGCLLLLQTQLL) traverse the membrane as a helical segment.

Belongs to the glutathione peroxidase family.

The protein localises to the membrane. It carries out the reaction 2 glutathione + H2O2 = glutathione disulfide + 2 H2O. In Tetraodon nigroviridis (Spotted green pufferfish), this protein is Probable glutathione peroxidase 8 (gpx8).